A 76-amino-acid polypeptide reads, in one-letter code: Exodeoxyribonuclease 7 small subunit (76 aa).

The protein belongs to the XseB family. Heterooligomer composed of large and small subunits.

Its subcellular location is the cytoplasm. The enzyme catalyses Exonucleolytic cleavage in either 5'- to 3'- or 3'- to 5'-direction to yield nucleoside 5'-phosphates.. In terms of biological role, bidirectionally degrades single-stranded DNA into large acid-insoluble oligonucleotides, which are then degraded further into small acid-soluble oligonucleotides. This chain is Exodeoxyribonuclease 7 small subunit, found in Staphylococcus epidermidis (strain ATCC 35984 / DSM 28319 / BCRC 17069 / CCUG 31568 / BM 3577 / RP62A).